The following is a 124-amino-acid chain: Histone H2A, embryonic (124 aa).

The segment covering M1–S18 has biased composition (basic residues). The segment at M1 to A21 is disordered. Position 2 is an N-acetylserine (S2). S2 carries the post-translational modification Phosphoserine. N5-methylglutamine is present on Q104. Residue K119 forms a Glycyl lysine isopeptide (Lys-Gly) (interchain with G-Cter in ubiquitin) linkage.

It belongs to the histone H2A family. The nucleosome is a histone octamer containing two molecules each of H2A, H2B, H3 and H4 assembled in one H3-H4 heterotetramer and two H2A-H2B heterodimers. The octamer wraps approximately 147 bp of DNA. Monoubiquitination of Lys-119 gives a specific tag for epigenetic transcriptional repression. Post-translationally, phosphorylation of Ser-2 directly represses transcription.

The protein resides in the nucleus. The protein localises to the chromosome. Core component of nucleosome. Nucleosomes wrap and compact DNA into chromatin, limiting DNA accessibility to the cellular machineries which require DNA as a template. Histones thereby play a central role in transcription regulation, DNA repair, DNA replication and chromosomal stability. DNA accessibility is regulated via a complex set of post-translational modifications of histones, also called histone code, and nucleosome remodeling. The protein is Histone H2A, embryonic of Psammechinus miliaris (Green sea urchin).